Reading from the N-terminus, the 215-residue chain is Large ribosomal subunit protein bL25 (215 aa).

Residues 192–203 (EEATEEEEEAAE) are compositionally biased toward acidic residues. The tract at residues 192–215 (EEATEEEEEAAEPEVIKRKEEEEE) is disordered. Positions 205 to 215 (EVIKRKEEEEE) are enriched in basic and acidic residues.

It belongs to the bacterial ribosomal protein bL25 family. CTC subfamily. Part of the 50S ribosomal subunit; part of the 5S rRNA/L5/L18/L25 subcomplex. Contacts the 5S rRNA. Binds to the 5S rRNA independently of L5 and L18.

Its function is as follows. This is one of the proteins that binds to the 5S RNA in the ribosome where it forms part of the central protuberance. This Thermotoga maritima (strain ATCC 43589 / DSM 3109 / JCM 10099 / NBRC 100826 / MSB8) protein is Large ribosomal subunit protein bL25.